Reading from the N-terminus, the 785-residue chain is Phenylalanine--tRNA ligase beta subunit (785 aa).

Positions 38-150 (CEHLKTFVIA…NTYNVGDTFF (113 aa)) constitute a tRNA-binding domain. Residues 394 to 470 (VDNIELNFFP…RLYGYDKICE (77 aa)) form the B5 domain. Mg(2+) is bound by residues Asp-448, Asp-454, Glu-457, and Glu-458. The FDX-ACB domain occupies 690–783 (SCYQSVKRDF…VAEKLGGVLR (94 aa)).

The protein belongs to the phenylalanyl-tRNA synthetase beta subunit family. Type 1 subfamily. As to quaternary structure, tetramer of two alpha and two beta subunits. Requires Mg(2+) as cofactor.

It is found in the cytoplasm. It catalyses the reaction tRNA(Phe) + L-phenylalanine + ATP = L-phenylalanyl-tRNA(Phe) + AMP + diphosphate + H(+). This Ehrlichia canis (strain Jake) protein is Phenylalanine--tRNA ligase beta subunit.